Consider the following 111-residue polypeptide: Regulator of ribonuclease activity B (111 aa).

Belongs to the RraB family. Interacts with the C-terminal region of Rne.

The protein localises to the cytoplasm. Its function is as follows. Globally modulates RNA abundance by binding to RNase E (Rne) and regulating its endonucleolytic activity. Can modulate Rne action in a substrate-dependent manner by altering the composition of the degradosome. In Pseudoalteromonas translucida (strain TAC 125), this protein is Regulator of ribonuclease activity B.